Reading from the N-terminus, the 162-residue chain is Endoribonuclease YbeY (162 aa).

Residues histidine 130, histidine 134, and histidine 140 each coordinate Zn(2+).

It belongs to the endoribonuclease YbeY family. It depends on Zn(2+) as a cofactor.

It is found in the cytoplasm. Functionally, single strand-specific metallo-endoribonuclease involved in late-stage 70S ribosome quality control and in maturation of the 3' terminus of the 16S rRNA. In Nitratidesulfovibrio vulgaris (strain ATCC 29579 / DSM 644 / CCUG 34227 / NCIMB 8303 / VKM B-1760 / Hildenborough) (Desulfovibrio vulgaris), this protein is Endoribonuclease YbeY.